The following is a 77-amino-acid chain: MDPSMANNPELLQFLAQEKERAMVNEMVSKMTSVCWDKCITSAPGSKFSSSESSCLTHCAQRYMDMSMIIMKRFNSQ.

Met1 carries the N-acetylmethionine modification. Positions 35–59 match the Twin CX3C motif motif; that stretch reads CWDKCITSAPGSKFSSSESSCLTHC. Cystine bridges form between Cys35/Cys59 and Cys39/Cys55.

The protein belongs to the small Tim family. Heterohexamer; composed of 3 copies of TIM8 and 3 copies of TIM13, named soluble 70 kDa complex. Associates with the TIM22 complex, whose core is composed of TIM22. As to expression, expressed in roots, flowers, young cotyledons and leaves.

It is found in the mitochondrion intermembrane space. Mitochondrial intermembrane chaperone that participates in the import and insertion of some multi-pass transmembrane proteins into the mitochondrial inner membrane. Also required for the transfer of beta-barrel precursors from the TOM complex to the sorting and assembly machinery (SAM complex) of the outer membrane. Acts as a chaperone-like protein that protects the hydrophobic precursors from aggregation and guide them through the mitochondrial intermembrane space. The TIM8-TIM13 complex mediates the import of some proteins while the predominant TIM9-TIM10 70 kDa complex mediates the import of much more proteins. The sequence is that of Mitochondrial import inner membrane translocase subunit TIM8 (TIM8) from Arabidopsis thaliana (Mouse-ear cress).